The following is a 513-amino-acid chain: MQLNSTEISDLIKQRIEQFEVVSEARNEGTIVAVSDGIIRIHGLADVMQGEMIELPGNRFAIALNLERDSVGAVVMGPYASLAEGDKVKTTGRILEVPVGRGLLGRVVNTLGEPIDGKGPIDNDGFSPVEMIAPGVIERKSVDQPVQTGYKAVDSMIPIGRGQRELIIGDRQIGKTALAIDAIINQKDTGIKCVYVAVGQKASTIANVVRKLEEHGALANTIVVVATASEAAALQYLAPYSGCSMGEYFRDRGEDSLIVYDDLSKQAVAYRQISLLLKRPPGREAYPGDVFYLHSRLLERASRVNAEYVEKFTKGEVKGQTGSLTALPIIETQAGDVSAFVPTNVISITDGQIFLETDLFNSGLRPAVNPGISVSRVGGAAQTKIIKKLSGGIRSALAQYRELAAFSQFASDLDDATRAQLEHGERVTELMKQKQYAPMSVADQSVSIFSAEKGYLKSVELNKIGDFEASLLSYMNSEHADLMKTINETGNYNADIEGELKAGLDKFVETQTW.

ATP is bound at residue 169-176; that stretch reads GDRQIGKT.

The protein belongs to the ATPase alpha/beta chains family. F-type ATPases have 2 components, CF(1) - the catalytic core - and CF(0) - the membrane proton channel. CF(1) has five subunits: alpha(3), beta(3), gamma(1), delta(1), epsilon(1). CF(0) has three main subunits: a(1), b(2) and c(9-12). The alpha and beta chains form an alternating ring which encloses part of the gamma chain. CF(1) is attached to CF(0) by a central stalk formed by the gamma and epsilon chains, while a peripheral stalk is formed by the delta and b chains.

It is found in the cell inner membrane. It carries out the reaction ATP + H2O + 4 H(+)(in) = ADP + phosphate + 5 H(+)(out). In terms of biological role, produces ATP from ADP in the presence of a proton gradient across the membrane. The alpha chain is a regulatory subunit. This Shewanella woodyi (strain ATCC 51908 / MS32) protein is ATP synthase subunit alpha.